The following is a 640-amino-acid chain: 1-deoxy-D-xylulose-5-phosphate synthase (640 aa).

Residues His72 and 113-115 (GHA) each bind thiamine diphosphate. Asp144 contributes to the Mg(2+) binding site. Residues 145 to 146 (GA), Asn174, Tyr287, and Glu370 contribute to the thiamine diphosphate site. Residue Asn174 participates in Mg(2+) binding.

This sequence belongs to the transketolase family. DXPS subfamily. As to quaternary structure, homodimer. Mg(2+) serves as cofactor. The cofactor is thiamine diphosphate.

It carries out the reaction D-glyceraldehyde 3-phosphate + pyruvate + H(+) = 1-deoxy-D-xylulose 5-phosphate + CO2. Its pathway is metabolic intermediate biosynthesis; 1-deoxy-D-xylulose 5-phosphate biosynthesis; 1-deoxy-D-xylulose 5-phosphate from D-glyceraldehyde 3-phosphate and pyruvate: step 1/1. Catalyzes the acyloin condensation reaction between C atoms 2 and 3 of pyruvate and glyceraldehyde 3-phosphate to yield 1-deoxy-D-xylulose-5-phosphate (DXP). This Synechococcus sp. (strain RCC307) protein is 1-deoxy-D-xylulose-5-phosphate synthase.